A 220-amino-acid polypeptide reads, in one-letter code: Ribose-5-phosphate isomerase A (220 aa).

Residues 28–31 (TGST), 81–84 (DGAD), and 94–97 (KGGG) each bind substrate. The active-site Proton acceptor is E103. Substrate is bound at residue K121.

It belongs to the ribose 5-phosphate isomerase family. Homodimer.

It carries out the reaction aldehydo-D-ribose 5-phosphate = D-ribulose 5-phosphate. Its pathway is carbohydrate degradation; pentose phosphate pathway; D-ribose 5-phosphate from D-ribulose 5-phosphate (non-oxidative stage): step 1/1. Catalyzes the reversible conversion of ribose-5-phosphate to ribulose 5-phosphate. This Yersinia enterocolitica serotype O:8 / biotype 1B (strain NCTC 13174 / 8081) protein is Ribose-5-phosphate isomerase A.